Here is a 50-residue protein sequence, read N- to C-terminus: uncharacterized protein (50 aa).

This is an uncharacterized protein from Haemophilus influenzae (strain ATCC 51907 / DSM 11121 / KW20 / Rd).